The primary structure comprises 754 residues: Ribosomal RNA large subunit methyltransferase K/L (754 aa).

Positions Thr-46–Leu-157 constitute a THUMP domain.

Belongs to the methyltransferase superfamily. RlmKL family.

It is found in the cytoplasm. It catalyses the reaction guanosine(2445) in 23S rRNA + S-adenosyl-L-methionine = N(2)-methylguanosine(2445) in 23S rRNA + S-adenosyl-L-homocysteine + H(+). It carries out the reaction guanosine(2069) in 23S rRNA + S-adenosyl-L-methionine = N(2)-methylguanosine(2069) in 23S rRNA + S-adenosyl-L-homocysteine + H(+). Functionally, specifically methylates the guanine in position 2445 (m2G2445) and the guanine in position 2069 (m7G2069) of 23S rRNA. In Pseudomonas fluorescens (strain ATCC BAA-477 / NRRL B-23932 / Pf-5), this protein is Ribosomal RNA large subunit methyltransferase K/L.